A 355-amino-acid polypeptide reads, in one-letter code: Zinc finger A20 and AN1 domain-containing stress-associated protein 3 (355 aa).

The A20-type zinc finger occupies 199 to 233; that stretch reads AGQPVLCASGCGFYGNPATLDMCSVCYRQHCLLNG. Zn(2+)-binding residues include Cys-205, Cys-209, Cys-221, Cys-224, Cys-295, Cys-298, Cys-309, Cys-311, Cys-316, His-319, His-325, and Cys-327. Residues 289-335 form an AN1-type zinc finger; it reads KAPANRCASCKKKVGLLGFACRCGATYCGTHRYPEKHACGFDFKGAS.

Its function is as follows. May be involved in environmental stress response. This chain is Zinc finger A20 and AN1 domain-containing stress-associated protein 3 (SAP3), found in Oryza sativa subsp. japonica (Rice).